Here is a 95-residue protein sequence, read N- to C-terminus: Costars family protein WS02710_H03 (95 aa).

Belongs to the costars family.

The chain is Costars family protein WS02710_H03 from Picea sitchensis (Sitka spruce).